A 1076-amino-acid polypeptide reads, in one-letter code: Zinc-regulated protein 8 (1076 aa).

Over residues 1-11 (MRSFIKAHKKS) the composition is skewed to basic residues. Disordered regions lie at residues 1–66 (MRSF…PGFE), 85–162 (SNLN…RTTD), 190–223 (PASP…TSPS), and 234–253 (KNKG…SSKK). Over residues 23–34 (NFSGNTNNSSQR) the composition is skewed to polar residues. The span at 93-106 (STPTTSTNQTTSNS) shows a compositional bias: low complexity. The segment covering 107-117 (FVLQNPPTKNT) has biased composition (polar residues). Residues 118–128 (GPPPPLPPPLF) show a composition bias toward pro residues. Polar residues-rich tracts occupy residues 193–206 (PASN…SKQF) and 214–223 (ENLTSTTSPS). 2 positions are modified to phosphoserine: Ser-275 and Ser-354. Disordered regions lie at residues 357–450 (IRHG…DDES), 534–557 (LSDD…ESDN), and 566–585 (GKET…SLGE). Residues 362–378 (LQSSPSKVNKNDSQNET) show a composition bias toward polar residues. Phosphoserine is present on residues Ser-403 and Ser-407. Basic and acidic residues predominate over residues 408-418 (VNEKETHKAND). The segment covering 419 to 450 (CNDESSENGDGDNDHDDDYDDDDDDDDDDDES) has biased composition (acidic residues). The span at 576–585 (GHHDDASLGE) shows a compositional bias: basic and acidic residues. Phosphoserine is present on residues Ser-632 and Ser-676. Disordered stretches follow at residues 658–701 (NIIR…KPTV), 713–762 (SASD…PHSQ), 909–931 (RRTL…FSSV), 1000–1020 (HNVG…QISN), and 1042–1076 (PTNS…PKRA). Polar residues-rich tracts occupy residues 690–701 (LTGTTGSTKPTV) and 739–748 (QVSLQSSLYE).

This sequence belongs to the ZRG8 family. As to quaternary structure, interacts with BUD27, GIS1 and SSD1.

The protein localises to the cytoplasm. The protein resides in the bud. It is found in the bud neck. It localises to the bud tip. In terms of biological role, involved in the integrity functions of RAM, a conserved signaling network that regulates maintenance of polarized growth and daughter-cell-specific transcription. This is Zinc-regulated protein 8 (ZRG8) from Saccharomyces cerevisiae (strain ATCC 204508 / S288c) (Baker's yeast).